Here is a 379-residue protein sequence, read N- to C-terminus: Ribosomal RNA small subunit methyltransferase H (379 aa).

S-adenosyl-L-methionine-binding positions include 71-73 (GGH), E90, D157, and H164.

Belongs to the methyltransferase superfamily. RsmH family.

It is found in the cytoplasm. It carries out the reaction cytidine(1402) in 16S rRNA + S-adenosyl-L-methionine = N(4)-methylcytidine(1402) in 16S rRNA + S-adenosyl-L-homocysteine + H(+). Specifically methylates the N4 position of cytidine in position 1402 (C1402) of 16S rRNA. This is Ribosomal RNA small subunit methyltransferase H from Treponema pallidum (strain Nichols).